Consider the following 283-residue polypeptide: MAEITASLVKELRERTGAGMMDCKKALTEANGDIELAIENMRKSGAIKAAKKAGNVAADGVIKTKIDGNVAFILEVNCQTDFVAKDAGFQAFADKVLDAAVAGKITDVEVLKAQFEEERVALVAKIGENINIRRVASLEGDVLGSYQHGARIGVLVAAKGADEELVKQLAMHVAASRPEFVKPEDVSADVVEKEYQVQLDIAMQSGKPKEIAEKMVEGRMKKFTGEVSLTGQPFVMEPSKSVGQLLKEHNADVTGFIRFEVGEGIEKVETDFAAEVAAMSKQS.

Residues T80–V83 form an involved in Mg(2+) ion dislocation from EF-Tu region.

This sequence belongs to the EF-Ts family.

The protein localises to the cytoplasm. Functionally, associates with the EF-Tu.GDP complex and induces the exchange of GDP to GTP. It remains bound to the aminoacyl-tRNA.EF-Tu.GTP complex up to the GTP hydrolysis stage on the ribosome. This chain is Elongation factor Ts, found in Salmonella gallinarum (strain 287/91 / NCTC 13346).